Here is a 203-residue protein sequence, read N- to C-terminus: Outer-membrane lipoprotein carrier protein (203 aa).

Positions 1–21 (MKKMAIACALLSSVVASSVWA) are cleaved as a signal peptide. The segment at 178–203 (QQNGAVDPSKFTFTPPQGVTIDDQRK) is disordered.

The protein belongs to the LolA family. In terms of assembly, monomer.

The protein resides in the periplasm. Participates in the translocation of lipoproteins from the inner membrane to the outer membrane. Only forms a complex with a lipoprotein if the residue after the N-terminal Cys is not an aspartate (The Asp acts as a targeting signal to indicate that the lipoprotein should stay in the inner membrane). This chain is Outer-membrane lipoprotein carrier protein, found in Salmonella paratyphi A (strain ATCC 9150 / SARB42).